We begin with the raw amino-acid sequence, 399 residues long: Argininosuccinate synthase (399 aa).

ATP is bound at residue 8–16 (AYSGGLDTS). Tyr-87 is an L-citrulline binding site. Gly-117 contributes to the ATP binding site. Residues Thr-119, Asn-123, and Asp-124 each contribute to the L-aspartate site. Asn-123 contacts L-citrulline. The L-citrulline site is built by Arg-127, Ser-175, Glu-260, and Tyr-272.

Belongs to the argininosuccinate synthase family. Type 1 subfamily. In terms of assembly, homotetramer.

It is found in the cytoplasm. The enzyme catalyses L-citrulline + L-aspartate + ATP = 2-(N(omega)-L-arginino)succinate + AMP + diphosphate + H(+). Its pathway is amino-acid biosynthesis; L-arginine biosynthesis; L-arginine from L-ornithine and carbamoyl phosphate: step 2/3. The sequence is that of Argininosuccinate synthase from Mycolicibacterium smegmatis (strain ATCC 700084 / mc(2)155) (Mycobacterium smegmatis).